We begin with the raw amino-acid sequence, 249 residues long: MSVTMRQMLEAGCHFGHQTRFWSPKMAPFIFGHRNKIHIINLEKTLPMFQDALKFAKQVASNRGTILFVGTKRQSREIIAEEAARAGMPYIDSRWLGGTLTNFKTVKGSLKRLKDMAVAKEAGDWEKLSKKEALTNDRDLDKLQKALGGIQDLNGVPDAIFVVDVGYHKIAITEANKLGIPVIAVVDTNHSPEGVDYIIPGNDDSSKAVLLYARGIADAILEGKANSVQEILTAVKEGEEEFVEEGKAE.

Belongs to the universal ribosomal protein uS2 family.

The sequence is that of Small ribosomal subunit protein uS2 from Polynucleobacter asymbioticus (strain DSM 18221 / CIP 109841 / QLW-P1DMWA-1) (Polynucleobacter necessarius subsp. asymbioticus).